The primary structure comprises 106 residues: Halilectin 3, beta chain (106 aa).

A glycan (N-linked (GlcNAc...) asparagine) is linked at Asn65.

In terms of assembly, probable heterotrimer consisting of an alpha chain and two beta chains. The alpha chain can probably have different glycosylation states. In terms of processing, glycosylated.

Lectin with affinity for N-acetyl-galactosamine, carragenan and glycoprotein porcine stomach mucin (PSM). Has metal-independent hemagglutinating activity towards erythrocytes from rabbit and human. Hemagglutinating activity is not inhibited by D-galactose, D-glucose, D-mannose, D-fucose, methyl-alpha-D-galactopyranoside, methyl-alpha-D-glucopyranoside, N-acetyl-glucosamine, N-acetyl-mannosamine, D-fructose, alpha-D-lactose, beta-D-lactose, D-lactulose, D-sucrose, fucoidan or glycoproteins thyroglobulin and ovalmucoid. The sequence is that of Halilectin 3, beta chain from Haliclona caerulea (Blue Caribbean sponge).